We begin with the raw amino-acid sequence, 156 residues long: Crossover junction endodeoxyribonuclease RuvC (156 aa).

Active-site residues include Asp7, Glu66, and Asp138. Mg(2+)-binding residues include Asp7, Glu66, and Asp138.

This sequence belongs to the RuvC family. As to quaternary structure, homodimer which binds Holliday junction (HJ) DNA. The HJ becomes 2-fold symmetrical on binding to RuvC with unstacked arms; it has a different conformation from HJ DNA in complex with RuvA. In the full resolvosome a probable DNA-RuvA(4)-RuvB(12)-RuvC(2) complex forms which resolves the HJ. Mg(2+) is required as a cofactor.

The protein resides in the cytoplasm. It catalyses the reaction Endonucleolytic cleavage at a junction such as a reciprocal single-stranded crossover between two homologous DNA duplexes (Holliday junction).. In terms of biological role, the RuvA-RuvB-RuvC complex processes Holliday junction (HJ) DNA during genetic recombination and DNA repair. Endonuclease that resolves HJ intermediates. Cleaves cruciform DNA by making single-stranded nicks across the HJ at symmetrical positions within the homologous arms, yielding a 5'-phosphate and a 3'-hydroxyl group; requires a central core of homology in the junction. The consensus cleavage sequence is 5'-(A/T)TT(C/G)-3'. Cleavage occurs on the 3'-side of the TT dinucleotide at the point of strand exchange. HJ branch migration catalyzed by RuvA-RuvB allows RuvC to scan DNA until it finds its consensus sequence, where it cleaves and resolves the cruciform DNA. The sequence is that of Crossover junction endodeoxyribonuclease RuvC from Ehrlichia canis (strain Jake).